Consider the following 398-residue polypeptide: Secreted aspartic protease 2 (398 aa).

A signal peptide spans 1–18 (MFLKNIFIALAIALLVDA). Positions 19 to 56 (TPTTTKRSAGFVALDFSVVKTPKAFPVTNGQEGKTSKR) are cleaved as a propeptide — activation peptide. The Peptidase A1 domain maps to 70 to 384 (YAADITVGSN…DLDDNEISLA (315 aa)). Asp-88 is a catalytic residue. 88–90 (DTG) is a pepstatin A binding site. A disulfide bridge connects residues Cys-103 and Cys-115. 141 to 142 (GD) serves as a coordination point for pepstatin A. Zn(2+) contacts are provided by Asp-247 and Asp-270. The active site involves Asp-274. 274–278 (DSGTT) provides a ligand contact to pepstatin A. Cysteines 312 and 350 form a disulfide. N-linked (GlcNAc...) asparagine glycans are attached at residues Asn-313 and Asn-321.

Belongs to the peptidase A1 family. In terms of assembly, monomer.

It is found in the secreted. It catalyses the reaction Preferential cleavage at the carboxyl of hydrophobic amino acids, but fails to cleave 15-Leu-|-Tyr-16, 16-Tyr-|-Leu-17 and 24-Phe-|-Phe-25 of insulin B chain. Activates trypsinogen, and degrades keratin.. Functionally, secreted aspartic peptidases (SAPs) are a group of ten acidic hydrolases considered as key virulence factors. These enzymes supply the fungus with nutrient amino acids as well as are able to degrade the selected host's proteins involved in the immune defense. Induces host inflammatory cytokine production in a proteolytic activity-independent way. Plays a role in tissue damage during superficial infection. Moreover, acts toward human hemoglobin though limited proteolysis to generate a variety of antimicrobial hemocidins, enabling to compete with the other microorganisms of the same physiological niche using the microbicidal peptides generated from the host protein. In terms of biological role, plays a key role in defense against host by cleaving histatin-5 (Hst 5), a peptide from human saliva that carries out fungicidal activity. The cleavage rate decreases in an order of SAP2 &gt; SAP9 &gt; SAP3 &gt; SAP7 &gt; SAP4 &gt; SAP1 &gt; SAP8. The first cleavage occurs between residues 'Lys-17' and 'His-18' of Hst 5, giving DSHAKRHHGYKRKFHEK and HHSHRGY peptides. Simultaneously, the DSHAKRHHGYKRK peptide is also formed. Further fragmentation by SAP2 results in FHEK and DSHAKRHHGY products. The polypeptide is Secreted aspartic protease 2 (Candida albicans (strain SC5314 / ATCC MYA-2876) (Yeast)).